The chain runs to 599 residues: Sulfite reductase [NADPH] flavoprotein alpha-component (599 aa).

Residues I64 to V202 form the Flavodoxin-like domain. Residues S70–A75, S117–G120, and L153–C162 each bind FMN. The 215-residue stretch at D234–P448 folds into the FAD-binding FR-type domain. FAD contacts are provided by residues T322, A356, R386–S389, T404–G406, Y410, and G419–S422. Residues S519–R520, K525–Q529, and D561 contribute to the NADP(+) site. Y599 is an FAD binding site.

This sequence belongs to the NADPH-dependent sulphite reductase flavoprotein subunit CysJ family. The protein in the N-terminal section; belongs to the flavodoxin family. It in the C-terminal section; belongs to the flavoprotein pyridine nucleotide cytochrome reductase family. In terms of assembly, alpha(8)-beta(8). The alpha component is a flavoprotein, the beta component is a hemoprotein. It depends on FAD as a cofactor. Requires FMN as cofactor.

It catalyses the reaction hydrogen sulfide + 3 NADP(+) + 3 H2O = sulfite + 3 NADPH + 4 H(+). Its pathway is sulfur metabolism; hydrogen sulfide biosynthesis; hydrogen sulfide from sulfite (NADPH route): step 1/1. Component of the sulfite reductase complex that catalyzes the 6-electron reduction of sulfite to sulfide. This is one of several activities required for the biosynthesis of L-cysteine from sulfate. The flavoprotein component catalyzes the electron flow from NADPH -&gt; FAD -&gt; FMN to the hemoprotein component. This chain is Sulfite reductase [NADPH] flavoprotein alpha-component, found in Shigella boydii serotype 4 (strain Sb227).